The chain runs to 360 residues: Photosystem II protein D1 (360 aa).

3 helical membrane passes run 30–47 (YVGW…AAAA), 119–134 (HFLI…QWEL), and 143–157 (WICV…AAFA). His119 provides a ligand contact to chlorophyll a. Tyr127 lines the pheophytin a pocket. [CaMn4O5] cluster contacts are provided by Asp171 and Glu190. The helical transmembrane segment at 198–219 (FHMAGVAGMFGGSLFSAMHGSL) threads the bilayer. Residue His199 coordinates chlorophyll a. A quinone contacts are provided by residues His216 and 265–266 (SF). Fe cation is bound at residue His216. His273 contributes to the Fe cation binding site. Residues 275-289 (FLAVFPVVCVWLTSM) traverse the membrane as a helical segment. [CaMn4O5] cluster is bound by residues His333, Glu334, Asp343, and Ala345. A propeptide spanning residues 346–360 (AAESTTVALSAPAIG) is cleaved from the precursor.

The protein belongs to the reaction center PufL/M/PsbA/D family. As to quaternary structure, PSII is composed of 1 copy each of membrane proteins PsbA, PsbB, PsbC, PsbD, PsbE, PsbF, PsbH, PsbI, PsbJ, PsbK, PsbL, PsbM, PsbT, PsbX, PsbY, Psb30/Ycf12, peripheral proteins PsbO, CyanoQ (PsbQ), PsbU, PsbV and a large number of cofactors. It forms dimeric complexes. It depends on The D1/D2 heterodimer binds P680, chlorophylls that are the primary electron donor of PSII, and subsequent electron acceptors. It shares a non-heme iron and each subunit binds pheophytin, quinone, additional chlorophylls, carotenoids and lipids. D1 provides most of the ligands for the Mn4-Ca-O5 cluster of the oxygen-evolving complex (OEC). There is also a Cl(-1) ion associated with D1 and D2, which is required for oxygen evolution. The PSII complex binds additional chlorophylls, carotenoids and specific lipids. as a cofactor. Post-translationally, tyr-162 forms a radical intermediate that is referred to as redox-active TyrZ, YZ or Y-Z. In terms of processing, C-terminally processed by CtpA; processing is essential to allow assembly of the oxygen-evolving complex and thus photosynthetic growth.

Its subcellular location is the cellular thylakoid membrane. The catalysed reaction is 2 a plastoquinone + 4 hnu + 2 H2O = 2 a plastoquinol + O2. Its function is as follows. Photosystem II (PSII) is a light-driven water:plastoquinone oxidoreductase that uses light energy to abstract electrons from H(2)O, generating O(2) and a proton gradient subsequently used for ATP formation. It consists of a core antenna complex that captures photons, and an electron transfer chain that converts photonic excitation into a charge separation. The D1/D2 (PsbA/PsbD) reaction center heterodimer binds P680, the primary electron donor of PSII as well as several subsequent electron acceptors. The chain is Photosystem II protein D1 from Prochlorococcus marinus (strain MIT 9312).